Consider the following 314-residue polypeptide: Acetaldehyde dehydrogenase 2 (314 aa).

11–14 (SGNI) contacts NAD(+). C129 (acyl-thioester intermediate) is an active-site residue. NAD(+)-binding positions include 160-168 (SAGPGTRAN) and N291.

This sequence belongs to the acetaldehyde dehydrogenase family.

It carries out the reaction acetaldehyde + NAD(+) + CoA = acetyl-CoA + NADH + H(+). The polypeptide is Acetaldehyde dehydrogenase 2 (Rhodococcus erythropolis (strain PR4 / NBRC 100887)).